A 305-amino-acid polypeptide reads, in one-letter code: UDP-3-O-acyl-N-acetylglucosamine deacetylase (305 aa).

Zn(2+) contacts are provided by histidine 79, histidine 238, and aspartate 242. Histidine 265 serves as the catalytic Proton donor.

This sequence belongs to the LpxC family. The cofactor is Zn(2+).

It carries out the reaction a UDP-3-O-[(3R)-3-hydroxyacyl]-N-acetyl-alpha-D-glucosamine + H2O = a UDP-3-O-[(3R)-3-hydroxyacyl]-alpha-D-glucosamine + acetate. It participates in glycolipid biosynthesis; lipid IV(A) biosynthesis; lipid IV(A) from (3R)-3-hydroxytetradecanoyl-[acyl-carrier-protein] and UDP-N-acetyl-alpha-D-glucosamine: step 2/6. Functionally, catalyzes the hydrolysis of UDP-3-O-myristoyl-N-acetylglucosamine to form UDP-3-O-myristoylglucosamine and acetate, the committed step in lipid A biosynthesis. This is UDP-3-O-acyl-N-acetylglucosamine deacetylase from Proteus mirabilis (strain HI4320).